Here is a 538-residue protein sequence, read N- to C-terminus: Phosphoenolpyruvate carboxykinase (ATP) (538 aa).

Positions 61, 195, and 201 each coordinate substrate. Residues K201, H220, and 236–244 contribute to the ATP site; that span reads GLSGTGKTT. Mn(2+)-binding residues include K201 and H220. Mn(2+) is bound at residue D257. Positions 285, 323, and 449 each coordinate ATP. Residue R323 coordinates substrate.

This sequence belongs to the phosphoenolpyruvate carboxykinase (ATP) family. Requires Mn(2+) as cofactor.

The protein localises to the cytoplasm. The catalysed reaction is oxaloacetate + ATP = phosphoenolpyruvate + ADP + CO2. Its pathway is carbohydrate biosynthesis; gluconeogenesis. Functionally, involved in the gluconeogenesis. Catalyzes the conversion of oxaloacetate (OAA) to phosphoenolpyruvate (PEP) through direct phosphoryl transfer between the nucleoside triphosphate and OAA. This chain is Phosphoenolpyruvate carboxykinase (ATP), found in Bradyrhizobium diazoefficiens (strain JCM 10833 / BCRC 13528 / IAM 13628 / NBRC 14792 / USDA 110).